The sequence spans 317 residues: Melanocyte-stimulating hormone receptor (317 aa).

Residues 1 to 37 (MPMHGAQRKLLGSLNSTPTATSNLGLAANHTGAPCLE) lie on the Extracellular side of the membrane. A glycan (N-linked (GlcNAc...) asparagine) is linked at Asn-29. A helical membrane pass occupies residues 38 to 63 (VSIPDGLFLSLGLVSLVENVLVVAAI). Residues 64–72 (AKNRNLHSS) are Cytoplasmic-facing. A helical membrane pass occupies residues 73–93 (MYCFICCLALSDLLVSGSNML). Over 94-118 (ETAVILLLEAGALATRTSAMQQLHN) the chain is Extracellular. A helical membrane pass occupies residues 119-140 (TIDVLTCSSMLCSLCFLGAIAV). The Cytoplasmic portion of the chain corresponds to 141 to 163 (DRYISIFYALRYHSIMTLPRAQR). The helical transmembrane segment at 164 to 183 (AIAAIWVASXLSSTLFITYY) threads the bilayer. Topologically, residues 184 to 191 (DHAAVLLC) are extracellular. A helical transmembrane segment spans residues 192–211 (LVVFFLAMLVLMAVLYVHML). Residues 212 to 240 (ARACQHAHGIIRLHKRQTPAHQGFGLRGA) are Cytoplasmic-facing. The chain crosses the membrane as a helical span at residues 241–266 (ATLTILLGIFFLCWGPFFLHLTLVVF). Residues 267–279 (CPQHLTCSCIFKN) are Extracellular-facing. The chain crosses the membrane as a helical span at residues 280 to 300 (FKVFLTLIICNTIIDPLIYAF). Residues 301–317 (RSQELRRTLKEVLLCSW) lie on the Cytoplasmic side of the membrane. Residue Cys-315 is the site of S-palmitoyl cysteine attachment.

It belongs to the G-protein coupled receptor 1 family. As to quaternary structure, interacts with MGRN1, but does not undergo MGRN1-mediated ubiquitination; this interaction competes with GNAS-binding and thus inhibits agonist-induced cAMP production. Interacts with OPN3; the interaction results in a decrease in MC1R-mediated cAMP signaling and ultimately a decrease in melanin production in melanocytes.

Its subcellular location is the cell membrane. In terms of biological role, receptor for MSH (alpha, beta and gamma) and ACTH. The activity of this receptor is mediated by G proteins which activate adenylate cyclase. Mediates melanogenesis, the production of eumelanin (black/brown) and phaeomelanin (red/yellow), via regulation of cAMP signaling in melanocytes. The polypeptide is Melanocyte-stimulating hormone receptor (MC1R) (Saguinus midas (Golden-handed tamarin)).